The following is a 181-amino-acid chain: Succinate dehydrogenase [ubiquinone] cytochrome b small subunit, mitochondrial (181 aa).

The N-terminal 31 residues, 1–31 (MMLPRSMKFMTGRRIFHTATVRAFQSTAKKS), are a transit peptide targeting the mitochondrion. Topologically, residues 32 to 66 (LTIPFLPVLPQKPGGVRGTPNDAYVPPPENKLEGS) are mitochondrial matrix. A helical membrane pass occupies residues 67 to 88 (YHWYMEKIFALSVVPLATTAML). Topologically, residues 89–98 (TTGPLSTAAD) are mitochondrial intermembrane. Residues 99 to 118 (SFFSVMLLGYCYMEFNSCIT) form a helical membrane-spanning segment. Cysteine 109 is a binding site for heme. At 119–127 (DYISERVYG) the chain is on the mitochondrial matrix side. An a ubiquinone-binding site is contributed by tyrosine 120. Residues 128–148 (VWHKYAMYMLGLGSAVSLFGI) traverse the membrane as a helical segment. Residues 149-181 (YKLETENDGVVGLVKSLWDSSEKDNSQKIEAKK) lie on the Mitochondrial intermembrane side of the membrane.

It belongs to the CybS family. In terms of assembly, forms part of complex II containing four subunits: a flavoprotein (FP), an iron-sulfur protein (IP) and a cytochrome b composed of a large and a small subunit.

The protein localises to the mitochondrion inner membrane. Its pathway is carbohydrate metabolism; tricarboxylic acid cycle. Functionally, membrane-anchoring subunit of succinate dehydrogenase (SDH) that is involved in system II of the mitochondrial electron transport chain and is responsible for transferring electrons from succinate to ubiquinone (coenzyme Q). SDH3 and SDH4 form the membrane dimer that anchors the catalytic dimer formed by SDH1 and SDH2 to the matrix surface of the mitochondrial inner membrane. Electrons originating from the catalytic dimer enter the membrane dimer for ubiquinone reduction. This Saccharomyces cerevisiae (strain ATCC 204508 / S288c) (Baker's yeast) protein is Succinate dehydrogenase [ubiquinone] cytochrome b small subunit, mitochondrial (SDH4).